The chain runs to 157 residues: Dihydrofolate reductase type 1 (157 aa).

A DHFR domain is found at 2-156 (KLSLMVAISK…INYSYQIWQK (155 aa)).

It belongs to the dihydrofolate reductase family. Homodimer.

The catalysed reaction is (6S)-5,6,7,8-tetrahydrofolate + NADP(+) = 7,8-dihydrofolate + NADPH + H(+). Its pathway is cofactor biosynthesis; tetrahydrofolate biosynthesis; 5,6,7,8-tetrahydrofolate from 7,8-dihydrofolate: step 1/1. In terms of biological role, key enzyme in folate metabolism. Catalyzes an essential reaction for de novo glycine and purine synthesis, and for DNA precursor synthesis. This chain is Dihydrofolate reductase type 1 (dhfrI), found in Escherichia coli.